The primary structure comprises 450 residues: Beclin-1 (450 aa).

Met-1 carries the N-acetylmethionine modification. A phosphoserine mark is found at Ser-15 and Ser-30. The segment at 48–72 (TTAQAKPGETQEEETNSGEEPFIET) is disordered. Phosphoserine; by AMPK is present on residues Ser-90, Ser-93, and Ser-96. The short motif at 108–127 (TMENLSRRLKVTGDLFDIMS) is the BH3 element. The tract at residues 112–159 (LSRRLKVTGDLFDIMSGQTDVDHPLCEECTDTLLDQLDTQLNVTENEC) is interaction with BCL2 and BCL2L1 isoform Bcl-X(L). The residue at position 119 (Thr-119) is a Phosphothreonine; by DAPK1. Residues 142 to 270 (DTLLDQLDTQ…LDKLKKTNVF (129 aa)) are a coiled coil. Residues 245–450 (DELKSVENQM…AWVSSQFYNK (206 aa)) are evolutionary conserved domain (ECD). Glycyl lysine isopeptide (Lys-Gly) (interchain with G-Cter in ubiquitin) cross-links involve residues Lys-402 and Lys-437. The segment at 425 to 450 (WTKALKFMLTNLKWGLAWVSSQFYNK) is required for membrane-association.

This sequence belongs to the beclin family. A homodimeric form is proposed to exist; this metastable form readily transits to ATG14- or UVRAG-containing complexes with BECN1:UVRAG being more stable than BECN1:ATG14. Component of the PI3K (PI3KC3/PI3K-III/class III phosphatidylinositol 3-kinase) complex the core of which is composed of the catalytic subunit PIK3C3, the regulatory subunit PIK3R4 and BECN1 associating with additional regulatory/auxiliary subunits to form alternative complex forms. Alternative complex forms containing a fourth regulatory subunit in a mutually exclusive manner are PI3K complex I (PI3KC3-C1) containing ATG14, and PI3K complex II (PI3KC3-C2) containing UVRAG. PI3KC3-C1 displays a V-shaped architecture with PIK3R4 serving as a bridge between PIK3C3 and the ATG14:BECN1 subcomplex. Both, PI3KC3-C1 and PI3KC3-C2, can associate with further regulatory subunits, such as RUBCN, SH3GLB1/Bif-1 and AMBRA1. PI3KC3-C1 probably associates with PIK3CB. Forms a complex with PPP2CA and AMBRA1; AMBRA1 and BECN1 components of the complex regulate MYC stability via different pathways. Component of the complex, at least composed of LRPPRC, BECN1 and BCL2; the interactions prevent BECN1 from forming an autophagy-inducing complex with PIK3C3. Interacts with AMBRA1, GOPC, GRID2. Interacts with BCL2 and BCL2L1 isoform Bcl-X(L); the interaction inhibits BECN1 function in promoting autophagy by interfering with the formation of the PI3K complex. Interacts with cytosolic HMGB1; inhibits the interaction of BECN1 and BCL2 leading to promotion of autophagy. Interacts with USP10, USP13, VMP1, DAPK1, RAB39A. Interacts with the poly-Gln domain of ATXN3; the interaction causes deubiquitination at Lys-402 and stabilizes BECN1. Interacts with SLAMF1. Interacts with TRIM5; the interaction causes activation of BECN1 by causing its dissociation from its inhibitors BCL2 and TAB2. Interacts with active ULK1 (phosphorylated on 'Ser-317') and MEFV simultaneously. Interacts with WDR81 and WDR91; negatively regulates the PI3 kinase/PI3K activity associated with endosomal membranes. Interacts with LAPTM4B; competes with EGFR for LAPTM4B binding; regulates EGFR activity. Interacts with TRIM50. Interacts with TRIM16. Interacts with ATG14; this interaction is increased in the absence of TMEM39A. Interacts with WASHC1; preventing interaction with AMBRA1 and the DCX(AMBRA1) complex and subsequent ubiquitination. Interacts with TRIM17. Interacts with BCL2L10/BCL-B (via BH1 domain). Interacts with SH3BGRL. Interacts with IRGM; enhancing BECN1-interacting partners and influencing the composition of the BECN1 complex. Interacts with ARMC3. Interacts with LRPPRC. As to quaternary structure, (Microbial infection) Interacts with human cytomegalovirus/HHV-5 protein TRS1. In terms of assembly, (Microbial infection) Interacts with murine gammaherpesvirus 68 M11. (Microbial infection) Interacts with herpes simplex virus 1 (HHV-1) protein ICP34.5; this interaction antagonizes the host autophagy response. As to quaternary structure, (Microbial infection) Interacts with Epstein-Barr virus protein BHRF1; this interaction inhibits BECN1-mediated autophagy induction. Post-translationally, phosphorylation at Thr-119 by DAPK1 reduces its interaction with BCL2 and BCL2L1 and promotes induction of autophagy. In response to autophagic stimuli, phosphorylated at serine residues by AMPK in an ATG14-dependent manner, and this phosphorylation is critical for maximally efficient autophagy. In terms of processing, polyubiquitinated by NEDD4, both with 'Lys-11'- and 'Lys-63'-linkages. 'Lys-11'-linked polyubiquitination leads to degradation and is enhanced when the stabilizing interaction partner VPS34 is depleted. Deubiquitinated by USP10 and USP13, leading to stabilize the PIK3C3/VPS34-containing complexes. Polyubiquitinated at Lys-402 with 'Lys-48'-linkages. 'Lys-48'-linked polyubiquitination of Lys-402 leads to degradation. Deubiquitinated by ATXN3, leading to stabilization. Ubiquitinated at Lys-437 via 'Lys-63'-linkage by the DCX(AMBRA1) complex, thereby increasing the association between BECN1 and PIK3C3 to promote PIK3C3 activity. 'Lys-48'-linked ubiquitination by RNF216 leads to proteasomal degradation and autophagy inhibition. Proteolytically processed by caspases including CASP8 and CASP3; the C-terminal fragments lack autophagy-inducing capacity and are proposed to induce apoptosis. Thus the cleavage is proposed to be an determinant to switch from autophagy to apoptosis pathways affecting cellular homeostasis including viral infections and survival of tumor cells. As to expression, ubiquitous.

It is found in the cytoplasm. The protein resides in the golgi apparatus. The protein localises to the trans-Golgi network membrane. Its subcellular location is the endosome membrane. It localises to the endoplasmic reticulum membrane. It is found in the mitochondrion membrane. The protein resides in the endosome. The protein localises to the cytoplasmic vesicle. Its subcellular location is the autophagosome. It localises to the mitochondrion. It is found in the nucleus. Functionally, plays a central role in autophagy. Acts as a core subunit of the PI3K complex that mediates formation of phosphatidylinositol 3-phosphate; different complex forms are believed to play a role in multiple membrane trafficking pathways: PI3KC3-C1 is involved in initiation of autophagosomes and PI3KC3-C2 in maturation of autophagosomes and endocytosis. Involved in regulation of degradative endocytic trafficking and required for the abscission step in cytokinesis, probably in the context of PI3KC3-C2. Essential for the formation of PI3KC3-C2 but not PI3KC3-C1 PI3K complex forms. Involved in endocytosis. May play a role in antiviral host defense. Beclin-1-C 35 kDa localized to mitochondria can promote apoptosis; it induces the mitochondrial translocation of BAX and the release of proapoptotic factors. In terms of biological role, (Microbial infection) Protects against infection by a neurovirulent strain of Sindbis virus. This is Beclin-1 (BECN1) from Homo sapiens (Human).